A 114-amino-acid chain; its full sequence is Cytokine SCM-1 beta (114 aa).

A signal peptide spans 1 to 21 (MRLLILALLGICSLTAYIVEG). Cys-32 and Cys-69 form a disulfide bridge. The tract at residues 91–114 (RNNMIQTKPTGTQQSTNTAVTLTG) is disordered.

It belongs to the intercrine gamma family.

It localises to the secreted. Functionally, chemotactic activity for lymphocytes but not for monocytes or neutrophils. This Homo sapiens (Human) protein is Cytokine SCM-1 beta (XCL2).